The following is an 89-amino-acid chain: Large ribosomal subunit protein bL27 (89 aa).

It belongs to the bacterial ribosomal protein bL27 family.

The protein is Large ribosomal subunit protein bL27 of Cereibacter sphaeroides (strain ATCC 17029 / ATH 2.4.9) (Rhodobacter sphaeroides).